Consider the following 94-residue polypeptide: Large ribosomal subunit protein uL23 (94 aa).

This sequence belongs to the universal ribosomal protein uL23 family. As to quaternary structure, part of the 50S ribosomal subunit. Contacts protein L29, and trigger factor when it is bound to the ribosome.

Functionally, one of the early assembly proteins it binds 23S rRNA. One of the proteins that surrounds the polypeptide exit tunnel on the outside of the ribosome. Forms the main docking site for trigger factor binding to the ribosome. The sequence is that of Large ribosomal subunit protein uL23 from Treponema denticola (strain ATCC 35405 / DSM 14222 / CIP 103919 / JCM 8153 / KCTC 15104).